A 398-amino-acid polypeptide reads, in one-letter code: MKLKFYKLPLITTAFSFVFLTACSTPQSSFFLPAQTTISTLKINGMENKTGYFLETQRSRGSYNPTASLTMIKLGDEKEFKNVDTTKQDEVLFANIYGGISSLLNFRIIQPMLTYWNLVNNSLSQIGSTNDLITFKDSGYKDQLAKALANNLIVADEGNNNFWFGLKALKFDTVKLQANNTATSSTRASTTQNTNNKIDAREKITINGNGGTNNDQNATVQKLIGIENIEVEFSFVKTGFNGNEIKFEDYVTDSSPTTSLLKQVWKSKWNTELTHTSFKFKLNSFNVLLTYQLEANQKSQYLPNGFSFLFPSNLEGKIDSSKSYWNNLVDFSKRTTNEENTMLLTDLQKKQDQVNRFVGFIGQNHFTLSANSINEKQFNDASTADFFKAIFQKVSINE.

A signal peptide spans 1–22 (MKLKFYKLPLITTAFSFVFLTA). The N-palmitoyl cysteine moiety is linked to residue cysteine 23. Residue cysteine 23 is the site of S-diacylglycerol cysteine attachment.

The protein resides in the cell membrane. This is an uncharacterized protein from Mycoplasma genitalium (strain ATCC 33530 / DSM 19775 / NCTC 10195 / G37) (Mycoplasmoides genitalium).